A 358-amino-acid chain; its full sequence is DnaJ homolog subfamily B member 11 (358 aa).

A signal peptide spans 1–22; sequence MAPQNLSTFCLLLLYLIGTVIA. Positions 25 to 90 constitute a J domain; that stretch reads DFYKILGVPR…EKRKQYDTYG (66 aa). Thr-188 is modified (phosphothreonine). A glycan (N-linked (GlcNAc...) asparagine) is linked at Asn-261.

In terms of assembly, part of a large chaperone multiprotein complex comprising DNAJB11, HSP90B1, HSPA5, HYOU, PDIA2, PDIA4, PDIA6, PPIB, SDF2L1, UGGT1 and very small amounts of ERP29, but not, or at very low levels, CALR nor CANX. Binds to denatured substrates in an ATP-independent manner. Interacts via the J domain with HSPA5 in an ATP-dependent manner. In terms of processing, contains high-mannose Endo H-sensitive carbohydrates. Post-translationally, cys-169, Cys-171, Cys-193 and Cys-196 form intramolecular disulfide bonds. The preferential partner for each Cys is not known.

The protein resides in the endoplasmic reticulum lumen. As a co-chaperone for HSPA5 it is required for proper folding, trafficking or degradation of proteins. Binds directly to both unfolded proteins that are substrates for ERAD and nascent unfolded peptide chains, but dissociates from the HSPA5-unfolded protein complex before folding is completed. May help recruiting HSPA5 and other chaperones to the substrate. Stimulates HSPA5 ATPase activity. It is necessary for maturation and correct trafficking of PKD1. This Mus musculus (Mouse) protein is DnaJ homolog subfamily B member 11 (Dnajb11).